A 398-amino-acid polypeptide reads, in one-letter code: Argininosuccinate synthase (398 aa).

Residue 8–16 participates in ATP binding; that stretch reads AYSGGLDTS. An L-citrulline-binding site is contributed by Tyr87. Gly117 contributes to the ATP binding site. L-aspartate is bound by residues Thr119, Asn123, and Asp124. Asn123 is an L-citrulline binding site. L-citrulline contacts are provided by Arg127, Ser175, Glu260, and Tyr272.

The protein belongs to the argininosuccinate synthase family. Type 1 subfamily. Homotetramer.

It is found in the cytoplasm. It catalyses the reaction L-citrulline + L-aspartate + ATP = 2-(N(omega)-L-arginino)succinate + AMP + diphosphate + H(+). The protein operates within amino-acid biosynthesis; L-arginine biosynthesis; L-arginine from L-ornithine and carbamoyl phosphate: step 2/3. The polypeptide is Argininosuccinate synthase (Mycobacterium tuberculosis (strain ATCC 25618 / H37Rv)).